The primary structure comprises 253 residues: Hydroxyacylglutathione hydrolase (253 aa).

The Zn(2+) site is built by H54, H56, D58, H59, H110, D127, and H165.

It belongs to the metallo-beta-lactamase superfamily. Glyoxalase II family. In terms of assembly, monomer. It depends on Zn(2+) as a cofactor.

The enzyme catalyses an S-(2-hydroxyacyl)glutathione + H2O = a 2-hydroxy carboxylate + glutathione + H(+). The protein operates within secondary metabolite metabolism; methylglyoxal degradation; (R)-lactate from methylglyoxal: step 2/2. In terms of biological role, thiolesterase that catalyzes the hydrolysis of S-D-lactoyl-glutathione to form glutathione and D-lactic acid. In Idiomarina loihiensis (strain ATCC BAA-735 / DSM 15497 / L2-TR), this protein is Hydroxyacylglutathione hydrolase.